A 320-amino-acid polypeptide reads, in one-letter code: Beta-sarcoglycan (320 aa).

Low complexity predominate over residues 1–10 (MAAAAAAAAA). Residues 1-34 (MAAAAAAAAATEQQGSNGPVKKSMREKAVERRNV) are disordered. The Cytoplasmic segment spans residues 1-67 (MAAAAAAAAA…GLRGRKGNLA (67 aa)). The segment covering 23–34 (SMREKAVERRNV) has biased composition (basic and acidic residues). Residues 68-88 (ICVIVLLFILAVINLLITLVI) traverse the membrane as a helical; Signal-anchor for type II membrane protein segment. At 89–320 (WAVIRIGPNG…VSDNPCGNTH (232 aa)) the chain is on the extracellular side. N-linked (GlcNAc...) asparagine glycans are attached at residues Asn160, Asn213, and Asn260. 2 cysteine pairs are disulfide-bonded: Cys290-Cys316 and Cys292-Cys309.

It belongs to the sarcoglycan beta/delta/gamma/zeta family. Cross-link to form 2 major subcomplexes: one consisting of SGCB, SGCD and SGCG and the other consisting of SGCB and SGCD. The association between SGCB and SGCG is particularly strong while SGCA is loosely associated with the other sarcoglycans. Post-translationally, disulfide bonds are present. As to expression, most strongly expressed in skeletal and heart muscle. Also detected in proliferating myoblasts.

It is found in the cell membrane. The protein resides in the sarcolemma. The protein localises to the cytoplasm. Its subcellular location is the cytoskeleton. In terms of biological role, component of the sarcoglycan complex, a subcomplex of the dystrophin-glycoprotein complex which forms a link between the F-actin cytoskeleton and the extracellular matrix. The sequence is that of Beta-sarcoglycan (Sgcb) from Mus musculus (Mouse).